Here is a 638-residue protein sequence, read N- to C-terminus: Growth hormone receptor (638 aa).

The first 18 residues, 1 to 18, serve as a signal peptide directing secretion; sequence MDLWQLLLTLALAGSSDA. At 19–264 the chain is on the extracellular side; sequence FSGSEPTAAI…NQFTCEEDFY (246 aa). N-linked (GlcNAc...) asparagine glycosylation occurs at Asn46. 2 disulfide bridges follow: Cys56–Cys66 and Cys101–Cys112. Asn115 carries N-linked (GlcNAc...) asparagine glycosylation. A disulfide bridge connects residues Cys126 and Cys140. The Fibronectin type-III domain maps to 151–254; it reads PPIALNWTLL…EVLYVTLPQM (104 aa). 3 N-linked (GlcNAc...) asparagine glycosylation sites follow: Asn156, Asn161, and Asn200. A WSXWS motif motif is present at residues 240 to 244; sequence YGEFS. The helical transmembrane segment at 265–288 threads the bilayer; sequence FPWLLIIIFGIFGLTVMLFVFLFS. Over 289–638 the chain is Cytoplasmic; the sequence is KQQRIKMLIL…STDQLNKIMP (350 aa). A required for JAK2 binding region spans residues 294–379; the sequence is KMLILPPVPV…HQKSHSNLGV (86 aa). A Box 1 motif motif is present at residues 297-305; it reads ILPPVPVPK. The UbE motif signature appears at 340–349; sequence DSWVEFIELD. At Ser341 the chain carries Phosphoserine. A disordered region spans residues 353-388; the sequence is PDEKNEGSDTDRLLSSDHQKSHSNLGVKDGDSGRTS. Positions 356-372 are enriched in basic and acidic residues; it reads KNEGSDTDRLLSSDHQK. 2 positions are modified to phosphotyrosine: Tyr487 and Tyr595.

Belongs to the type I cytokine receptor family. Type 1 subfamily. On growth hormone (GH) binding, forms homodimers and binds JAK2 via a box 1-containing domain. The soluble form (GHBP) is produced by phorbol ester-promoted proteolytic cleavage at the cell surface (shedding) by ADAM17/TACE. Shedding is inhibited by growth hormone (GH) binding to the receptor probably due to a conformational change in GHR rendering the receptor inaccessible to ADAM17. Post-translationally, on GH binding, phosphorylated on tyrosine residues in the cytoplasmic domain by JAK2. In terms of processing, ubiquitinated by the ECS(SOCS2) complex following ligand-binding and phosphorylation by JAK2, leading to its degradation by the proteasome. Regulation by the ECS(SOCS2) complex acts as a negative feedback loop of growth hormone receptor signaling. Ubiquitination is not sufficient for GHR internalization.

It localises to the cell membrane. The protein resides in the secreted. In terms of biological role, receptor for pituitary gland growth hormone (GH1) involved in regulating postnatal body growth. On ligand binding, couples to the JAK2/STAT5 pathway. The soluble form (GHBP) acts as a reservoir of growth hormone in plasma and may be a modulator/inhibitor of GH signaling. The protein is Growth hormone receptor (GHR) of Papio anubis (Olive baboon).